The primary structure comprises 470 residues: MAGENHQWQGSILYNMLMSAKQTRAAPEAPETRLVDQCWGCSCGDEPGVGREGLLGGRNVALLYRCCFCGKDHPRQGSILYSMLTSAKQTYATPKAPEATLGPCWGCSCGSDPGVGRTGLPGGRPVALLYRCCFCGEDHPRQGSILYSLLTSAKQTHVAPAAPEARPGGAWWDRSYFAQKPGGREALPGGRATALLYRCCFCGEDHPQQGSTLYCMPTSTNQAQAAPEERPRAPWWDASSGALRPVALKNPQVVCEAASAGLLKTLRFVKYLPCFQVLPLDQQLVLVRNCWASLLMLELAQDRLQFETVEVSEPSMLQKILTTRRRETGGNEPLPVPTLQPHLAPPAEARKVPSASQVQAIKCFLSKCWSLNISTKEYAYLKGTVLFNRDVPGLQCVKYIQGLQWGTQQILSEHTRMTHQGPHDRFIELNSALFLLRFINANVIAELFFRPIIGTVSMDDMMLEMLCTKI.

3 consecutive repeat copies span residues 1–67 (MAGE…YRCC), 68–133 (FCGK…YRCC), and 134–200 (FCGE…YRCC). Residues 1-253 (MAGENHQWQG…RPVALKNPQV (253 aa)) are 4 X 67 AA tandem repeats. 3 short sequence motifs (LXXLL motif) span residues 13-17 (LYNML), 80-84 (LYSML), and 146-150 (LYSLL). A 4; truncated repeat occupies 201–253 (FCGEDHPQQGSTLYCMPTSTNQAQAAPEERPRAPWWDASSGALRPVALKNPQV). The NR LBD domain occupies 215–469 (CMPTSTNQAQ…DMMLEMLCTK (255 aa)). The AF-2 motif motif lies at 461 to 466 (MMLEML).

It belongs to the nuclear hormone receptor family. NR0 subfamily. Homodimer. Interacts with NR5A1, NR5A2, NR0B2 and with COPS2. Interacts with ESRRB; represses ESRRB activity at the GATA6 promoter.

Its subcellular location is the nucleus. It is found in the cytoplasm. Functionally, nuclear receptor that lacks a DNA-binding domain and acts as a corepressor that inhibits the transcriptional activity of other nuclear receptors through heterodimeric interactions. Component of a cascade required for the development of the hypothalamic-pituitary-adrenal-gonadal axis. May also have a role in the development of the embryo and in the maintenance of embryonic stem cell pluripotency. The chain is Nuclear receptor subfamily 0 group B member 1 (NR0B1) from Pongo pygmaeus (Bornean orangutan).